A 496-amino-acid chain; its full sequence is METYILSIDQGTTSSRAILFNKEGKIVHSAQKEFTQHFPQPGWVEHNANEIWGSVLAVIATVISESGISADQIAGIGITNQRETTVVWDKDTGKPVYNAIVWQSRQTSGICEELREKGYNDTFREKTGLLIDPYFSGTKVKWILDNVEGAREKAENGNLLFGTIDSWLIWKMSGGAAHVTDYSNASRTLMFNIHELKWDDELLDILGVPKSMLPEVKPSSHVYAKTVDYHFFGKNIPIAGAAGDQQSALFGQACFEEGMGKNTYGTGCFMLMNTGEKAITSDHGLLTTIAWGLDGKVEYALEGSIFVAGSAIQWLRDGMRMFQDSKESETYAERVDSADGVYVVPAFVGLGTPYWDSDVRGSVFGLTRGTTKEHFIRATLESLAYQAKDVLDAMEADSGISLKTLRVDGGAVKNNFLMQFQSDLLDVPVERPEINETTALGAAYLAGIAVGYWKDSTEIADQWNLDKQFKPEMEDEKRDELYGGWKKAVNAAMAFK.

Thr-12 contributes to the ADP binding site. The ATP site is built by Thr-12, Thr-13, and Ser-14. Sn-glycerol 3-phosphate is bound at residue Thr-12. Position 16 (Arg-16) interacts with ADP. 3 residues coordinate sn-glycerol 3-phosphate: Arg-82, Glu-83, and Tyr-134. Glycerol contacts are provided by Arg-82, Glu-83, and Tyr-134. His-230 is subject to Phosphohistidine; by HPr. A sn-glycerol 3-phosphate-binding site is contributed by Asp-244. 2 residues coordinate glycerol: Asp-244 and Gln-245. Positions 266 and 309 each coordinate ADP. ATP contacts are provided by Thr-266, Gly-309, Gln-313, and Gly-410. Gly-410 and Asn-414 together coordinate ADP.

This sequence belongs to the FGGY kinase family. As to quaternary structure, homotetramer and homodimer (in equilibrium). The phosphoenolpyruvate-dependent sugar phosphotransferase system (PTS), including enzyme I, and histidine-containing protein (HPr) are required for the phosphorylation, which leads to the activation of the enzyme.

The enzyme catalyses glycerol + ATP = sn-glycerol 3-phosphate + ADP + H(+). Its pathway is polyol metabolism; glycerol degradation via glycerol kinase pathway; sn-glycerol 3-phosphate from glycerol: step 1/1. Activated by phosphorylation and inhibited by fructose 1,6-bisphosphate (FBP). In terms of biological role, key enzyme in the regulation of glycerol uptake and metabolism. Catalyzes the phosphorylation of glycerol to yield sn-glycerol 3-phosphate. The polypeptide is Glycerol kinase (Bacillus velezensis (strain DSM 23117 / BGSC 10A6 / LMG 26770 / FZB42) (Bacillus amyloliquefaciens subsp. plantarum)).